The sequence spans 722 residues: WD repeat-containing and planar cell polarity effector protein fritz homolog (722 aa).

2 WD repeats span residues 305–343 (LRSK…TLLA) and 344–383 (QAEL…INIQ). The tract at residues 655–710 (IPNGPSSRWAIERRTEEEEEEEEEEEEELCTDSSGATTWNAEGELKEDQRKQDIGD) is disordered. The segment covering 671–684 (EEEEEEEEEEEELC) has biased composition (acidic residues). The span at 685–694 (TDSSGATTWN) shows a compositional bias: polar residues. The span at 697–708 (GELKEDQRKQDI) shows a compositional bias: basic and acidic residues.

It belongs to the WD repeat fritz family. In terms of assembly, component of the CPLANE (ciliogenesis and planar polarity effectors) complex, composed of INTU, FUZ and WDPCP. Interacts with CPLANE1.

The protein localises to the cell membrane. It localises to the cytoplasm. Its subcellular location is the cytoskeleton. The protein resides in the cilium axoneme. It is found in the cilium basal body. Probable effector of the planar cell polarity signaling pathway which regulates the septin cytoskeleton in both ciliogenesis and collective cell movements. Together with FUZ and WDPCP proposed to function as core component of the CPLANE (ciliogenesis and planar polarity effectors) complex involved in the recruitment of peripheral IFT-A proteins to basal bodies. Binds phosphatidylinositol 3-phosphate with highest affinity, followed by phosphatidylinositol 4-phosphate and phosphatidylinositol 5-phosphate. The sequence is that of WD repeat-containing and planar cell polarity effector protein fritz homolog (Wdpcp) from Mus musculus (Mouse).